A 686-amino-acid chain; its full sequence is Kinesin light chain (686 aa).

Disordered regions lie at residues Met-1–Gln-23 and Lys-158–Ala-204. Positions Ser-20–Asp-160 form a coiled coil. TPR repeat units lie at residues Leu-215–Thr-248, Ala-257–Thr-290, Ala-299–Val-332, Ala-341–Lys-374, Ala-383–Arg-416, and Thr-472–Ala-505. 2 disordered regions span residues Gln-520–Thr-558 and Gly-586–Phe-686. Residues Asp-675–Phe-686 show a composition bias toward polar residues.

It belongs to the kinesin light chain family. In terms of assembly, oligomeric complex composed of two heavy chains and two light chains. Post-translationally, phosphorylation may modulate the process of mechanochemical coupling.

Its subcellular location is the cytoplasm. The protein resides in the cytoskeleton. Kinesin is a microtubule-associated force-producing protein that may play a role in organelle transport. The light chain may function in coupling of cargo to the heavy chain or in the modulation of its ATPase activity. The protein is Kinesin light chain of Strongylocentrotus purpuratus (Purple sea urchin).